A 639-amino-acid polypeptide reads, in one-letter code: Threonine--tRNA ligase (639 aa).

Residues 1 to 61 form the TGS domain; the sequence is MIRITLPDNS…DHDARLQIIT (61 aa). The segment at 242-533 is catalytic; that stretch reads DHRRLGRELD…LIEQHAGALP (292 aa). Cys-333, His-384, and His-510 together coordinate Zn(2+).

Belongs to the class-II aminoacyl-tRNA synthetase family. Homodimer. The cofactor is Zn(2+).

It localises to the cytoplasm. It catalyses the reaction tRNA(Thr) + L-threonine + ATP = L-threonyl-tRNA(Thr) + AMP + diphosphate + H(+). Its function is as follows. Catalyzes the attachment of threonine to tRNA(Thr) in a two-step reaction: L-threonine is first activated by ATP to form Thr-AMP and then transferred to the acceptor end of tRNA(Thr). Also edits incorrectly charged L-seryl-tRNA(Thr). The sequence is that of Threonine--tRNA ligase from Paracidovorax citrulli (strain AAC00-1) (Acidovorax citrulli).